We begin with the raw amino-acid sequence, 222 residues long: Iodotyrosine deiodinase (222 aa).

Residues 34-38 (RRTVR) and 61-62 (PS) contribute to the FMN site. 3-iodo-L-tyrosine contacts are provided by glutamate 91, tyrosine 95, and lysine 116. FMN contacts are provided by residues 171-173 (THT) and arginine 212.

The protein belongs to the nitroreductase family. In terms of assembly, homodimer. The cofactor is FMN.

It catalyses the reaction 2 iodide + L-tyrosine + 2 NADP(+) = 3,5-diiodo-L-tyrosine + 2 NADPH + H(+). It carries out the reaction iodide + L-tyrosine + NADP(+) = 3-iodo-L-tyrosine + NADPH. The enzyme catalyses 3-iodo-L-tyrosine + iodide + NADP(+) = 3,5-diiodo-L-tyrosine + NADPH + H(+). The catalysed reaction is L-tyrosine + chloride + NADP(+) = 3-chloro-L-tyrosine + NADPH. It catalyses the reaction bromide + L-tyrosine + NADP(+) = 3-bromo-L-tyrosine + NADPH. In terms of biological role, catalyzes the dehalogenation of halotyrosines such as 3-iodo-L-tyrosine and 3,5-diiodo-L-tyrosine. Likely to also catalyze the dehalogenation of other halotyrosines such as 3-bromo-L-tyrosine, 3-chloro-L-tyrosine and 3-iodo-L-tyrosine. Activity towards 3-iodo-L-tyrosine is much stronger than activity towards 3,5-diiodo-L-tyrosine and 2-iodophenol. The polypeptide is Iodotyrosine deiodinase (Haliscomenobacter hydrossis (strain ATCC 27775 / DSM 1100 / LMG 10767 / O)).